Consider the following 443-residue polypeptide: Endoplasmic reticulum protein SC65 (443 aa).

The first 18 residues, 1–18 (MARAAWGLLWLLLGSAGA), serve as a signal peptide directing secretion. The segment at 81-102 (SGPATSQPRPAPGPDGDNEGDG) is disordered. An N-linked (GlcNAc...) asparagine glycan is attached at N367. Composition is skewed to acidic residues over residues 387-398 (DEMELEETESLP), 407-419 (AEFE…EEGL), and 431-443 (GDED…PELA). The tract at residues 387–443 (DEMELEETESLPEPEKPLSDAEFEGEGDYEEGLYADWWQEPDAKGDEDEAEPEPELA) is disordered.

This sequence belongs to the leprecan family. Interacts with PLOD1, P3H3 and PPIB. Identified in a complex with PLOD1 and P3H3. In terms of tissue distribution, found in testis, brain, heart and at a much lower level in liver.

It localises to the endoplasmic reticulum. Part of a complex composed of PLOD1, P3H3 and P3H4 that catalyzes hydroxylation of lysine residues in collagen alpha chains and is required for normal assembly and cross-linking of collagen fibrils. Required for normal bone density and normal skin stability via its role in hydroxylation of lysine residues in collagen alpha chains and in collagen fibril assembly. The protein is Endoplasmic reticulum protein SC65 of Rattus norvegicus (Rat).